We begin with the raw amino-acid sequence, 278 residues long: MVRYRLTVEYDGRGYCGWQRQDNGPTIQQSLEEAAFRLCGVATRVHGSGRTDSGVHALGQVAHLDLPRAYGAATVMKALNAHLRPQPIAVIDAAEVAEDFHARFSAEERSYRYRILNRIAPPTLDQGRVWWVARPMEAAIMDEAAQVLVGRHDFSSFRAAECQADSPVKTLSELRVTRVGDEIHVFARARSFLHHQVRNMVGTLALVGDGRWTADRLRAALEACDRSAAGPTAPPDGLYFLRVRFPGETAAPAKAGPLEAAPLGEAPLKEATLKEDWR.

The active-site Nucleophile is Asp-52. Tyr-111 provides a ligand contact to substrate. Residues 253-264 are compositionally biased toward low complexity; sequence AKAGPLEAAPLG. The interval 253-278 is disordered; the sequence is AKAGPLEAAPLGEAPLKEATLKEDWR. Positions 267–278 are enriched in basic and acidic residues; sequence PLKEATLKEDWR.

Belongs to the tRNA pseudouridine synthase TruA family. Homodimer.

It carries out the reaction uridine(38/39/40) in tRNA = pseudouridine(38/39/40) in tRNA. In terms of biological role, formation of pseudouridine at positions 38, 39 and 40 in the anticodon stem and loop of transfer RNAs. This Rhodospirillum rubrum (strain ATCC 11170 / ATH 1.1.1 / DSM 467 / LMG 4362 / NCIMB 8255 / S1) protein is tRNA pseudouridine synthase A.